A 267-amino-acid polypeptide reads, in one-letter code: 4-hydroxy-tetrahydrodipicolinate reductase (267 aa).

NAD(+)-binding positions include 8–13 and Asp34; that span reads GAAGRM. Arg35 provides a ligand contact to NADP(+). NAD(+)-binding positions include 98–100 and 122–125; these read GTT and AANF. Catalysis depends on His155, which acts as the Proton donor/acceptor. His156 lines the (S)-2,3,4,5-tetrahydrodipicolinate pocket. The Proton donor role is filled by Lys159. 165–166 contacts (S)-2,3,4,5-tetrahydrodipicolinate; sequence GT.

This sequence belongs to the DapB family.

It localises to the cytoplasm. It catalyses the reaction (S)-2,3,4,5-tetrahydrodipicolinate + NAD(+) + H2O = (2S,4S)-4-hydroxy-2,3,4,5-tetrahydrodipicolinate + NADH + H(+). The catalysed reaction is (S)-2,3,4,5-tetrahydrodipicolinate + NADP(+) + H2O = (2S,4S)-4-hydroxy-2,3,4,5-tetrahydrodipicolinate + NADPH + H(+). Its pathway is amino-acid biosynthesis; L-lysine biosynthesis via DAP pathway; (S)-tetrahydrodipicolinate from L-aspartate: step 4/4. In terms of biological role, catalyzes the conversion of 4-hydroxy-tetrahydrodipicolinate (HTPA) to tetrahydrodipicolinate. The protein is 4-hydroxy-tetrahydrodipicolinate reductase of Pseudomonas entomophila (strain L48).